The following is a 422-amino-acid chain: Histone deacetylase B (422 aa).

Residue D102 coordinates substrate. The active-site Proton acceptor is H144. Substrate is bound at residue G152. D179, H181, and D268 together coordinate a divalent metal cation. Y307 lines the substrate pocket. Positions 399–422 (IDFDRDEDSKENMDKRKKKHNDFS) are disordered. Residues 413–422 (KRKKKHNDFS) show a composition bias toward basic residues.

This sequence belongs to the histone deacetylase family. HD type 1 subfamily.

It is found in the nucleus. The protein localises to the cytoplasm. It carries out the reaction N(6)-acetyl-L-lysyl-[histone] + H2O = L-lysyl-[histone] + acetate. With respect to regulation, its activity is inhibited by trichostatin A (TSA), a well known histone deacetylase inhibitor. Cytosolic activity is refractory to inhibition by TSA, while the nuclear activity is inhibited completely. Functionally, responsible for the deacetylation of lysine residues on the N-terminal part of the core histones (H2A, H2B, H3 and H4). Histone deacetylation plays an important role in transcriptional regulation, cell cycle progression and developmental events. Histone deacetylases act via the formation of large multiprotein complexes. May play a role in the regulation of the timing of gene expression during the development and in the definition aspects of the phenotype that mediate social behavior in genetically heterogeneous groups. This chain is Histone deacetylase B (hdaB), found in Dictyostelium discoideum (Social amoeba).